The sequence spans 264 residues: Complement C1q tumor necrosis factor-related protein 6 (264 aa).

The N-terminal stretch at M1 to G24 is a signal peptide. N-linked (GlcNAc...) asparagine glycosylation occurs at N77. The interval L81 to C125 is disordered. The Collagen-like domain maps to G83–S124. The segment covering P90 to N100 has biased composition (low complexity). Residues C125 to N264 enclose the C1q domain.

The protein localises to the secreted. The sequence is that of Complement C1q tumor necrosis factor-related protein 6 (C1qtnf6) from Mus musculus (Mouse).